A 489-amino-acid chain; its full sequence is N-succinylglutamate 5-semialdehyde dehydrogenase (489 aa).

224–229 (GSAKVG) lines the NAD(+) pocket. Catalysis depends on residues Glu247 and Cys281.

Belongs to the aldehyde dehydrogenase family. AstD subfamily.

It catalyses the reaction N-succinyl-L-glutamate 5-semialdehyde + NAD(+) + H2O = N-succinyl-L-glutamate + NADH + 2 H(+). The protein operates within amino-acid degradation; L-arginine degradation via AST pathway; L-glutamate and succinate from L-arginine: step 4/5. Its function is as follows. Catalyzes the NAD-dependent reduction of succinylglutamate semialdehyde into succinylglutamate. This is N-succinylglutamate 5-semialdehyde dehydrogenase from Chromohalobacter salexigens (strain ATCC BAA-138 / DSM 3043 / CIP 106854 / NCIMB 13768 / 1H11).